A 103-amino-acid chain; its full sequence is Small ribosomal subunit protein uS10 (103 aa).

It belongs to the universal ribosomal protein uS10 family. As to quaternary structure, part of the 30S ribosomal subunit.

Involved in the binding of tRNA to the ribosomes. The sequence is that of Small ribosomal subunit protein uS10 from Neorickettsia sennetsu (strain ATCC VR-367 / Miyayama) (Ehrlichia sennetsu).